Consider the following 208-residue polypeptide: Guanylate kinase (208 aa).

Residues 4–181 (GLLIVISGPS…AVEKIQSIIS (178 aa)) enclose the Guanylate kinase-like domain. ATP is bound at residue 11 to 18 (GPSGTGKG).

This sequence belongs to the guanylate kinase family.

It localises to the cytoplasm. It catalyses the reaction GMP + ATP = GDP + ADP. In terms of biological role, essential for recycling GMP and indirectly, cGMP. The sequence is that of Guanylate kinase from Clostridium tetani (strain Massachusetts / E88).